Reading from the N-terminus, the 103-residue chain is Preprofallaxidin-6 (103 aa).

Residues Met1–Cys22 form the signal peptide. A propeptide spanning residues Glu23 to Arg49 is cleaved from the precursor. The interval Glu24–Gly50 is disordered. The span at Gly31–His41 shows a compositional bias: acidic residues. The residue at position 65 (Leu65) is a Leucine amide. The disordered stretch occupies residues Lys67–Lys103. Residues Ser69 to Arg73 constitute a propeptide that is removed on maturation. A Phenylalanine amide modification is found at Phe77. The propeptide occupies Ser81 to Arg85. Position 89 is a phenylalanine amide (Phe89). The propeptide occupies Ser93–Arg97. The residue at position 101 (Ile101) is an Isoleucine amide.

The protein belongs to the frog skin active peptide (FSAP) family. Brevinin subfamily. Expressed by the skin glands.

It is found in the secreted. Functionally, fallaxidin-1.3 shows no antibacterial activity against Gram-positive or Gram-negative bacteria. Does not inhibit the formation of NO by neuronal nitric oxide synthase. Has no effect on splenocyte proliferation or smooth muscle contraction. In terms of biological role, fallaxidin-1.4 shows no antibacterial activity against Gram-positive or Gram-negative bacteria. Does not inhibit the formation of NO by neuronal nitric oxide synthase. Has no effect on splenocyte proliferation or smooth muscle contraction. Its function is as follows. Fallaxidin-3.1 shows antibacterial activity against the Gram-positive bacteria E.faecalis (MIC=100 uM) and L.lactis (MIC=100 uM). No antibacterial activity against the Gram-positive bacteria B.cereus, L.innocua, M.luteus, S.epidermidis, S.uberis and S.aureus, or the Gram-negative bacteria E.cloacae and E.coli. The polypeptide is Preprofallaxidin-6 (Litoria fallax (Eastern dwarf tree frog)).